The chain runs to 179 residues: ATP synthase subunit delta (179 aa).

Belongs to the ATPase delta chain family. F-type ATPases have 2 components, F(1) - the catalytic core - and F(0) - the membrane proton channel. F(1) has five subunits: alpha(3), beta(3), gamma(1), delta(1), epsilon(1). F(0) has three main subunits: a(1), b(2) and c(10-14). The alpha and beta chains form an alternating ring which encloses part of the gamma chain. F(1) is attached to F(0) by a central stalk formed by the gamma and epsilon chains, while a peripheral stalk is formed by the delta and b chains.

The protein resides in the cell inner membrane. Its function is as follows. F(1)F(0) ATP synthase produces ATP from ADP in the presence of a proton or sodium gradient. F-type ATPases consist of two structural domains, F(1) containing the extramembraneous catalytic core and F(0) containing the membrane proton channel, linked together by a central stalk and a peripheral stalk. During catalysis, ATP synthesis in the catalytic domain of F(1) is coupled via a rotary mechanism of the central stalk subunits to proton translocation. Functionally, this protein is part of the stalk that links CF(0) to CF(1). It either transmits conformational changes from CF(0) to CF(1) or is implicated in proton conduction. This is ATP synthase subunit delta from Burkholderia thailandensis (strain ATCC 700388 / DSM 13276 / CCUG 48851 / CIP 106301 / E264).